The primary structure comprises 909 residues: MGPEALSSLLLLLLVASGDADMKGHFDPAKCRYALGMQDRTIPDSDISASSSWSDSTAARHSSDGDGAWCPAGSVFPKEEEYLQVDLQRLHLVALVGTQGRHAGGLGKEFSRSYRLRYSRDGRRWMGWKDRWGQEVISGNEDPEGVVLKDLGPPMVARLVRFYPRADRVMSVCLRVELYGCLWRDGLLSYTAPVGQTMYLSEAVYLNDSTYDGHTVGGLQYGGLGQLADGVVGLDDFRKSQELRVWPGYDYVGWSNHSFSSGYVEMEFEFDRLRAFQAMQVHCNNMHTLGARLPGGVECRFRRGPAMAWEGEPMRHNLGGNLGDPRARAVSVPLGGRVARFLQCRFLFAGPWLLFSEISFISDVVNNSSPALGGTFPPAPWWPPGPPPTNFSSLELEPRGQQPVAKAEGSPTAILIGCLVAIILLLLLIIALMLWRLHWRRLLSKAERRVLEEELTVHLSVPGDTILINNRPGPREPPPYQEPRPRGNPPHSAPCVPNGSALLLSNPAYRLLLATYARPPRGPGPPTPAWAKPTNTQAYSGDYMEPEKPGAPLLPPPPQNSVPHYAEADIVTLQGVTGGNTYAVPALPPGAVGDGPPRVDFPRSRLRFKEKLGEGQFGEVHLCEVDSPQDLVSLDFPLNVRKGHPLLVAVKILRPDATKNARNDFLKEVKIMSRLKDPNIIRLLGVCVQDDPLCMITDYMENGDLNQFLSAHQLEDKAAEGAPGDGQAAQGPTISYPMLLHVAAQIASGMRYLATLNFVHRDLATRNCLVGENFTIKIADFGMSRNLYAGDYYRVQGRAVLPIRWMAWECILMGKFTTASDVWAFGVTLWEVLMLCRAQPFGQLTDEQVIENAGEFFRDQGRQVYLSRPPACPQGLYELMLRCWSRESEQRPPFSQLHRFLAEDALNTV.

Positions 1–18 (MGPEALSSLLLLLLVASG) are cleaved as a signal peptide. The Extracellular segment spans residues 21-413 (DMKGHFDPAK…VAKAEGSPTA (393 aa)). The region spanning 31–181 (CRYALGMQDR…VCLRVELYGC (151 aa)) is the F5/8 type C domain. 2 cysteine pairs are disulfide-bonded: C31–C181 and C70–C173. The segment covering 45–60 (SDISASSSWSDSTAAR) has biased composition (low complexity). The interval 45 to 65 (SDISASSSWSDSTAARHSSDG) is disordered. The tract at residues 188–363 (LSYTAPVGQT…LFSEISFISD (176 aa)) is DS-like domain. N207, Q226, D229, V231, Y249, and Y251 together coordinate Ca(2+). The N-linked (GlcNAc...) asparagine glycan is linked to N207. N256 carries an N-linked (GlcNAc...) asparagine glycan. The cysteines at positions 299 and 344 are disulfide-linked. Residues S356 and E357 each coordinate Ca(2+). 2 N-linked (GlcNAc...) asparagine glycosylation sites follow: N366 and N390. Residues 414–434 (ILIGCLVAIILLLLLIIALML) form a helical membrane-spanning segment. The Cytoplasmic portion of the chain corresponds to 435–909 (WRLHWRRLLS…FLAEDALNTV (475 aa)). A disordered region spans residues 466–495 (ILINNRPGPREPPPYQEPRPRGNPPHSAPC). Residues 475-492 (REPPPYQEPRPRGNPPHS) show a composition bias toward pro residues. Positions 477-480 (PPPY) match the PPxY motif motif. Y480, Y509, and Y516 each carry phosphotyrosine; by autocatalysis. In terms of domain architecture, Protein kinase spans 606–901 (LRFKEKLGEG…PPFSQLHRFL (296 aa)). 612-620 (LGEGQFGEV) is an ATP binding site. Phosphoserine is present on S627. An ATP-binding site is contributed by K651. Residue Y736 is modified to Phosphotyrosine; by autocatalysis. The Proton acceptor role is filled by D762. Residues Y788, Y792, and Y793 each carry the phosphotyrosine; by autocatalysis modification.

It belongs to the protein kinase superfamily. Tyr protein kinase family. Insulin receptor subfamily. As to quaternary structure, homodimer. Interacts (via PPxY motif) with WWC1 (via WW domains) in a collagen-regulated manner. Forms a tripartite complex with WWC1 and PRKCZ, but predominantly in the absence of collagen. Interacts (tyrosine phosphorylated) with SHC1. Interacts with SRC. Interacts with MYH9. Interacts with CDH1. Interacts with PTPN11. Interacts with NCK2. Post-translationally, autophosphorylated in response to fibrillar collagen binding.

It is found in the cell membrane. It carries out the reaction L-tyrosyl-[protein] + ATP = O-phospho-L-tyrosyl-[protein] + ADP + H(+). Tyrosine kinase that functions as a cell surface receptor for fibrillar collagen and regulates cell attachment to the extracellular matrix, remodeling of the extracellular matrix, cell migration, differentiation, survival and cell proliferation. Collagen binding triggers a signaling pathway that involves SRC and leads to the activation of MAP kinases. Regulates remodeling of the extracellular matrix by up-regulation of the matrix metalloproteinases MMP2, MMP7 and MMP9, and thereby facilitates cell migration and wound healing. Promotes smooth muscle cell migration, and thereby contributes to arterial wound healing. Also plays a role in tumor cell invasion. Phosphorylates PTPN11. Required for normal blastocyst implantation during pregnancy, for normal mammary gland differentiation and normal lactation. Required for normal ear morphology and normal hearing. This Pan troglodytes (Chimpanzee) protein is Epithelial discoidin domain-containing receptor 1 (DDR1).